Here is a 166-residue protein sequence, read N- to C-terminus: Probable RNA-binding protein EIF1AD (166 aa).

Residues 5–89 (TKRKHVVKEV…VKAEISFVLC (85 aa)) form the S1-like domain. A Nuclear localization signal motif is present at residues 6 to 12 (KRKHVVK). Position 33 is a phosphothreonine (threonine 33). A Nuclear localization signal motif is present at residues 56–65 (KYRKNIWIKR). Positions 114–166 (NNNRNRQTQPELPAEPQLSGEESSSEDDSDLFVNTNRRQYRESEEESEEEEAA) are disordered. Serine 132, serine 136, serine 137, serine 138, serine 156, and serine 160 each carry phosphoserine. Residues 156–166 (SEEESEEEEAA) show a composition bias toward acidic residues.

The protein belongs to the EIF1AD family. In terms of assembly, interacts with GAPDH and STAT1.

Its subcellular location is the nucleus. In terms of biological role, plays a role into cellular response to oxidative stress. Decreases cell proliferation. This chain is Probable RNA-binding protein EIF1AD (EIF1AD), found in Pongo abelii (Sumatran orangutan).